Consider the following 415-residue polypeptide: D-galactonate dehydratase family member RspA (415 aa).

Residues Asn48 and His133 each contribute to the substrate site. The active-site Proton donor/acceptor is the Tyr170. Asp223 provides a ligand contact to Mg(2+). Catalysis depends on His225, which acts as the Proton donor/acceptor. 3 residues coordinate Mg(2+): Glu249, Asp250, and Glu275. Substrate-binding residues include Glu275, Arg296, His325, Asp329, and Glu352.

The protein belongs to the mandelate racemase/muconate lactonizing enzyme family. GalD subfamily. The cofactor is Mg(2+).

It carries out the reaction D-mannonate = 2-dehydro-3-deoxy-D-gluconate + H2O. In terms of biological role, has low D-mannonate dehydratase activity (in vitro), suggesting that this is not a physiological substrate and that it has no significant role in D-mannonate degradation in vivo. Has no detectable activity with a panel of 70 other acid sugars (in vitro). The protein is D-galactonate dehydratase family member RspA (rspA) of Escherichia coli O6:H1 (strain CFT073 / ATCC 700928 / UPEC).